Consider the following 138-residue polypeptide: Transposon Tn10 TetD protein (138 aa).

The region spanning 31–129 is the HTH araC/xylS-type domain; it reads KDVLLWIEHN…KVTPSYYRRN (99 aa). 2 DNA-binding regions (H-T-H motif) span residues 48-69 and 96-119; these read DDVANKAGYTKWYFQRLFKKVT and ILEIALKYQFDSQQSFTRRFKYIF.

The protein is Transposon Tn10 TetD protein (tetD) of Escherichia coli.